The sequence spans 759 residues: TSK-associating protein 1 (759 aa).

The N-terminal stretch at 1–29 is a signal peptide; sequence MEIYTMKTNFLVLALSLCILLSSFHEVSC. Positions 55 to 74 are disordered; that stretch reads GKDDEDQSAKIQSENQNNTT. Residues 63–74 show a composition bias toward polar residues; sequence AKIQSENQNNTT. EFE repeat repeat units follow at residues 91–138, 139–176, 177–215, 216–254, 255–293, 294–329, 330–368, 369–407, 408–443, and 444–473; these read VGSV…DEEL, SAHRQKMLEEIEHEFEAASDSLKQLKTDDVNEGNDEEH, SAKRQSLLEEIEREFEAATKELEQLKVNDFTGDKDDEEH, SAKRKSMLEAIEREFEAAMEGIEALKVSDSTGSGDDEEQ, SAKRLSMLEEIEREFEAASKGLEQLRASDSTADNNEEEH, AAKGQSLLEEIEREFEAATESLKQLQVDDSTEDKEH, FTAAKRQSLLEEIEREFEAATKDLKQLNDFTEGSADDEQ, SAKRNKMLEDIEREFEAATIGLEQLKANDFSEGNNNEEQ, SAKRKSMLEEIEREFEAAIGGLKQIKVDDSRNLEEE, and SAKRKIILEEMEREFEEAHSGINAKADKEE. The tract at residues 91–473 is 10 X approximate EFE repeat; sequence VGSVSDESVG…GINAKADKEE (383 aa). Coiled-coil stretches lie at residues 142-461 and 685-734; these read RQKM…FEEA and IKKL…AKDE. Disordered regions lie at residues 154-184, 200-219, 271-332, and 393-414; these read EAASDSLKQLKTDDVNEGNDEEHSAKRQSLL, QLKVNDFTGDKDDEEHSAKR, AASK…HFTA, and LKANDFSEGNNNEEQSAKRKSM.

Homomultimer. Interacts (via C-terminal domain) with GIP1, CSN1 (via N-terminal domain) and TSK (via TPR repeats). In terms of processing, binds calcium through the EFE repeats. Expressed preferentially in flowers and shoot apex.

The protein localises to the endoplasmic reticulum lumen. Its subcellular location is the nucleus envelope. The protein resides in the cytoplasm. Its function is as follows. Involved in seedling development in the dark. May be involved, when interacting with TSK, in the organization of spindle microtubules and may participate, when interacting with GIP1, in structural links between the nuclear envelope and the cytoskeleton. The sequence is that of TSK-associating protein 1 (TSA1) from Arabidopsis thaliana (Mouse-ear cress).